The chain runs to 192 residues: Der GTPase-activating protein YihI (192 aa).

Residues 1–80 (MSRTKKTRRI…KAAVKEVKDP (80 aa)) are disordered. 3 stretches are compositionally biased toward basic and acidic residues: residues 9-25 (RITDIMPARKADKKPEQ), 37-48 (TRYELDAKAREE), and 65-80 (DPAEQKKAAVKEVKDP).

It belongs to the YihI family. In terms of assembly, interacts with Der.

In terms of biological role, a GTPase-activating protein (GAP) that modifies Der/EngA GTPase function. May play a role in ribosome biogenesis. This Actinobacillus pleuropneumoniae serotype 7 (strain AP76) protein is Der GTPase-activating protein YihI.